The chain runs to 202 residues: Chromophore lyase CpcT/CpeT 2 (202 aa).

Belongs to the CpcT/CpeT biliprotein lyase family.

Its function is as follows. Covalently attaches a chromophore to Cys residue(s) of phycobiliproteins. The polypeptide is Chromophore lyase CpcT/CpeT 2 (Gloeobacter violaceus (strain ATCC 29082 / PCC 7421)).